The following is a 338-amino-acid chain: Ketol-acid reductoisomerase (NADP(+)) (338 aa).

A KARI N-terminal Rossmann domain is found at M1–T181. NADP(+) contacts are provided by residues F24–Q27, R47, S50, S52, and D82–Q85. The active site involves H107. An NADP(+)-binding site is contributed by G133. A KARI C-terminal knotted domain is found at T182–I327. 4 residues coordinate Mg(2+): D190, E194, E226, and E230. Substrate is bound at residue S251.

The protein belongs to the ketol-acid reductoisomerase family. It depends on Mg(2+) as a cofactor.

The enzyme catalyses (2R)-2,3-dihydroxy-3-methylbutanoate + NADP(+) = (2S)-2-acetolactate + NADPH + H(+). It catalyses the reaction (2R,3R)-2,3-dihydroxy-3-methylpentanoate + NADP(+) = (S)-2-ethyl-2-hydroxy-3-oxobutanoate + NADPH + H(+). It functions in the pathway amino-acid biosynthesis; L-isoleucine biosynthesis; L-isoleucine from 2-oxobutanoate: step 2/4. Its pathway is amino-acid biosynthesis; L-valine biosynthesis; L-valine from pyruvate: step 2/4. In terms of biological role, involved in the biosynthesis of branched-chain amino acids (BCAA). Catalyzes an alkyl-migration followed by a ketol-acid reduction of (S)-2-acetolactate (S2AL) to yield (R)-2,3-dihydroxy-isovalerate. In the isomerase reaction, S2AL is rearranged via a Mg-dependent methyl migration to produce 3-hydroxy-3-methyl-2-ketobutyrate (HMKB). In the reductase reaction, this 2-ketoacid undergoes a metal-dependent reduction by NADPH to yield (R)-2,3-dihydroxy-isovalerate. The chain is Ketol-acid reductoisomerase (NADP(+)) from Hydrogenovibrio crunogenus (strain DSM 25203 / XCL-2) (Thiomicrospira crunogena).